The primary structure comprises 1947 residues: Sodium channel protein type 3 subunit alpha (1947 aa).

Residues 1–128 (MAQALLVPPG…KIAIKILVHS (128 aa)) are Cytoplasmic-facing. Residues 28–60 (RAAEEKAKKPKKEQDIDDENKPKPNSDLEAGKN) are disordered. Residues 46–57 (ENKPKPNSDLEA) are compositionally biased toward basic and acidic residues. One copy of the I repeat lies at 110–455 (ILTPLNPVRK…QQMLEQLKKQ (346 aa)). The chain crosses the membrane as a helical span at residues 129–146 (LFSMLIMCTILTNCVFMT). Over 147–152 (LSNPPD) the chain is Extracellular. Residues 153-174 (WTKNVEYTFTGIYTFESLIKIL) traverse the membrane as a helical segment. The Cytoplasmic segment spans residues 175-188 (ARGFCLEDFTFLRD). A helical transmembrane segment spans residues 189-206 (PWNWLDFSVIVMAYVTEF). Residues 207–213 (VDLGNVS) lie on the Extracellular side of the membrane. N-linked (GlcNAc...) asparagine glycosylation is present at N211. The helical transmembrane segment at 214–235 (ALRTFRVLRALKTISVIPGLKT) threads the bilayer. The Cytoplasmic segment spans residues 236-249 (IVGALIQSVKKLSD). Residues 250 to 269 (VMILTVFCLSVFALIGLQLF) form a helical membrane-spanning segment. Topologically, residues 270–369 (MGNLRNKCLQ…NYGYTSFDTF (100 aa)) are extracellular. N-linked (GlcNAc...) asparagine glycosylation is found at N290, N296, N302, N307, and N339. Positions 370–386 (SWAFLSLFRLMTQDYWE) form an intramembrane region, pore-forming. The Extracellular portion of the chain corresponds to 387 to 397 (NLYQLTLRAAG). The helical transmembrane segment at 398-424 (KTYMIFFVLVIFLGSFYLVNLILAVVA) threads the bilayer. Over 425–712 (MAYEEQNQAT…LVNLIVMDPF (288 aa)) the chain is Cytoplasmic. 3 positions are modified to phosphoserine: S484, S485, and S486. Disordered stretches follow at residues 493-529 (SKSA…SESE) and 587-632 (VGSE…ETEV). Residues 500–509 (RNRRKKRRQR) show a composition bias toward basic residues. Composition is skewed to basic and acidic residues over residues 510–529 (EHLE…SESE) and 596–622 (DEHS…ERRN). The stretch at 693 to 965 (CCDSWLKVKH…QIAVGRMQKG (273 aa)) is one II repeat. Residues 713–730 (VDLAITICIVLNTLFMAM) traverse the membrane as a helical segment. Topologically, residues 731-738 (EHYPMTEQ) are extracellular. The chain crosses the membrane as a helical span at residues 739-763 (FSSVLTVGNLVFTGIFTAEMVLKII). Topologically, residues 764 to 773 (AMDPYYYFQE) are cytoplasmic. A helical transmembrane segment spans residues 774 to 793 (GWNIFDGIIVSLSLMELGLA). At 794 to 797 (NVEG) the chain is on the extracellular side. The helical transmembrane segment at 798–816 (LSVLRSFRLLRVFKLAKSW) threads the bilayer. Over 817–834 (PTLNMLIKIIGNSVGALG) the chain is Cytoplasmic. Residues 835–855 (NLTLVLAIIVFIFAVVGMQLF) traverse the membrane as a helical segment. The Extracellular portion of the chain corresponds to 856–880 (GKSYKECVCKINEDCKLPRWHMNDF). C864 and C870 are disulfide-bonded. An intramembrane region (pore-forming) is located at residues 881–896 (FHSFLIVFRVLCGEWI). Topologically, residues 897–907 (ETMWDCMEVAG) are extracellular. C902 and C911 form a disulfide bridge. The chain crosses the membrane as a helical span at residues 908-934 (QTMCLIVFMLVMVIGNLVVLNLFLALL). Residues 935-1157 (LSSFSSDNLA…RKTCYSIVEH (223 aa)) lie on the Cytoplasmic side of the membrane. A disordered region spans residues 1070–1113 (EEFSSESELEESKEKLNATSSSEGSTVDVAPPREGEQAEIEPEE). One copy of the III repeat lies at 1140–1451 (KGKIWWNLRK…KKYYNAMKKL (312 aa)). A helical transmembrane segment spans residues 1158-1178 (NWFETFIVFMILLSSGALAFE). Topologically, residues 1179-1190 (DIYIEQRKTIKT) are extracellular. A helical membrane pass occupies residues 1191–1212 (MLEYADKVFTYIFILEMLLKWV). Residues 1213-1218 (AYGFQT) lie on the Cytoplasmic side of the membrane. The helical transmembrane segment at 1219–1244 (YFTNAWCWLDFLIVDVSLVSLVANAL) threads the bilayer. Over 1245-1253 (GYSELGAIK) the chain is Extracellular. Residues 1254–1272 (SLRTLRALRPLRALSRFEG) traverse the membrane as a helical segment. Residues 1273 to 1285 (MRVVVNALVGAIP) lie on the Cytoplasmic side of the membrane. Residues 1286-1308 (SIMNVLLVCLIFWLIFSIMGVNL) form a helical membrane-spanning segment. Over 1309–1354 (FAGKFYHCVNMTTGSMFDMSEVNNFSDCQALGKQARWKNVKVNFDN) the chain is Extracellular. An intrachain disulfide couples C1316 to C1336. N-linked (GlcNAc...) asparagine glycans are attached at residues N1318 and N1332. An intramembrane region (pore-forming) is located at residues 1355–1371 (VGAGYLALLQVATFKGW). Topologically, residues 1372-1394 (MDIMYAAVDSRDVKLQPVYEENL) are extracellular. The helical transmembrane segment at 1395–1420 (YMYLYFVIFIIFGSFFTLNLFIGVII) threads the bilayer. Topologically, residues 1421–1478 (DNFNQQKKKFGGQDIFMTEEQKKYYNAMKKLGSKKPQKPIPRPANKFQGMVFDFVTRQ) are cytoplasmic. At S1453 the chain carries Phosphoserine. The IV repeat unit spans residues 1460–1758 (IPRPANKFQG…WEKFDPDATQ (299 aa)). The helical transmembrane segment at 1479–1497 (VFDISIMILICLNMVTMMV) threads the bilayer. Topologically, residues 1498-1505 (ETDDQSKY) are extracellular. Residues 1506-1529 (MTLVLSRINLVFIVLFTGEFLLKL) form a helical membrane-spanning segment. Residues 1530–1539 (ISLRYYYFTI) lie on the Cytoplasmic side of the membrane. Residues 1540–1557 (GWNIFDFVVVILSIVGMF) form a helical membrane-spanning segment. Residues 1558-1569 (LAELIEKYFVSP) lie on the Extracellular side of the membrane. A helical transmembrane segment spans residues 1570 to 1592 (TLFRVIRLARIGRILRLIKGAKG). Residues 1593–1605 (IRTLLFALMMSLP) lie on the Cytoplasmic side of the membrane. A helical membrane pass occupies residues 1606 to 1629 (ALFNIGLLLFLVMFIYAIFGMSNF). Residues 1630 to 1651 (AYVKKEAGIDDMFNFETFGNSM) are Extracellular-facing. An intramembrane region (pore-forming) is located at residues 1652-1664 (ICLFQITTSAGWD). Topologically, residues 1665-1696 (GLLAPILNSAPPDCDPDAIHPGSSVKGDCGNP) are extracellular. A helical transmembrane segment spans residues 1697-1722 (SVGIFFFVSYIIISFLVVVNMYIAVI). Residues 1723–1947 (LENFSVATEE…PEKESKGKEV (225 aa)) lie on the Cytoplasmic side of the membrane. The 30-residue stretch at 1852-1881 (EEVSAAIIQRNYRCYLLKQRLKNISNTYDK) folds into the IQ domain. Residues 1901–1947 (LNGNSTPEKTDGSSSTTSPPSYDSVTKPDKEKFEKDKPEKESKGKEV) form a disordered region. Basic and acidic residues predominate over residues 1926–1947 (TKPDKEKFEKDKPEKESKGKEV).

Belongs to the sodium channel (TC 1.A.1.10) family. Nav1.3/SCN3A subfamily. In terms of assembly, heterooligomer of an alpha subunit, SCN3A, and 1 to 3 regulatory beta subunits including SCN1B and SCN2B; disulfide-linked with some beta subunits like SCN2B. Interacts with NEDD4L; could regulate expression of SCN3A at the plasma membrane through ubiquitination-regulated endocytosis. May be ubiquitinated by NEDD4L; which would promote its endocytosis. Post-translationally, phosphorylation at Ser-1453 in a highly conserved cytoplasmic loop slows inactivation of the channel and reduces peak sodium currents. In terms of tissue distribution, expressed in enterochromaffin cells in both colon and small bowel (at protein level). Expressed in pancreatic alpha and beta cells.

Its subcellular location is the cell membrane. It localises to the basal cell membrane. It catalyses the reaction Na(+)(in) = Na(+)(out). Pore-forming subunit of Nav1.3, a voltage-gated sodium (Nav) channel that directly mediates the depolarizing phase of action potentials in excitable membranes. Navs, also called VGSCs (voltage-gated sodium channels) or VDSCs (voltage-dependent sodium channels), operate by switching between closed and open conformations depending on the voltage difference across the membrane. In the open conformation they allow Na(+) ions to selectively pass through the pore, along their electrochemical gradient. The influx of Na+ ions provokes membrane depolarization, initiating the propagation of electrical signals throughout cells and tissues. In some secretory cell types, it also participates in cell excitability through membrane depolarization and regulates cells responsiveness to stimuli triggering secretion. For instance, it controls the release of serotonin/5-hydroxytryptamine by enterochromaffin cells and is required for both glucagon- and glucose-induced insulin secretion in pancreatic endocrine cells. In Mus musculus (Mouse), this protein is Sodium channel protein type 3 subunit alpha.